Reading from the N-terminus, the 310-residue chain is Protoheme IX farnesyltransferase (310 aa).

Transmembrane regions (helical) follow at residues 31 to 51 (VIEL…RGSV), 53 to 73 (PLLI…ANTL), 102 to 122 (NALI…WGTS), 124 to 144 (LLSG…YTLL), 149 to 169 (TSQN…IGWS), 170 to 190 (AVTG…FFWT), 242 to 262 (LATG…FLVM), and 289 to 309 (LAVV…TLLG).

Belongs to the UbiA prenyltransferase family. Protoheme IX farnesyltransferase subfamily.

The protein localises to the cell membrane. The enzyme catalyses heme b + (2E,6E)-farnesyl diphosphate + H2O = Fe(II)-heme o + diphosphate. It functions in the pathway porphyrin-containing compound metabolism; heme O biosynthesis; heme O from protoheme: step 1/1. Converts heme B (protoheme IX) to heme O by substitution of the vinyl group on carbon 2 of heme B porphyrin ring with a hydroxyethyl farnesyl side group. The chain is Protoheme IX farnesyltransferase from Mycobacterium sp. (strain JLS).